Consider the following 969-residue polypeptide: MSFALGQRWISDTESDLGLGTVVAVDDRTVSLLFAASEENRLYAKHDAPVTRVMFNKGDTIESHEGWSLDVEDVIEEGGLLTYIGTRVDTDEANVVLRETLLSHQIRFNKPQDKLFAGQIDRMDRFALRFRALQNQYEQHKSPMRGLCGMRAGLIPHQLFIAHEVGRRYAPRVLLADEVGLGKTIEAGMIIHQQVLSGRAERVLIVVPETLQHQWLVEMMRRFNLHFSIFDEERCVEAYADSENPFDTAQFVLCSLDFIRKSKRRFEQVVEADWDLLVVDEAHHLEWNQTKPSREYQVIEAIAEETPGVLLLTATPEQLGHESHFARLRLLDPDRFYDYDAFVEEERQYQPVADAVTALMSGEKLSNDAKNRITELLSEQDVEPLFRIIESSAAEDEQAQARQELVDNLMDRHGTGRVLFRNTRAAIKGFPQRNLNLMPMPLPSQYATSMRVATMMGGRMTDEARAMKMLYPEEIFQEFEGDSATWWQFDPRVNWLLELLKENRNEKVLIIASRASTALQLEQALREREGIRGTVFHEGMSIIERDKAAAYFAQEEGGAQVLICSEIGSEGRNFQFANQLVMFDLPFNPDLLEQRIGRLDRIGQKRDIEIHVPYLQGTSQELLARWFDEGLNAFGETCPTGRAVYDKFADAIIAILATGKSDGLESLIEESAALNKSLKAQLEQGRDRLLEVHSNGGDKAKEIAEQIAATDGDTNLVNFALNLFDTIGLNQDDKGENAIVVTPAENMLVSSYPGLPYEGCTITFDRETALSREDMNLISWEHPMIQGGIDLVLTEGVGATAVSLLKNKALPAGTLLLELVYVVDAQAPKQSGIARFLPKTPIRIMMDGKGNDLSAQVEFESFNRQLSPVNRHMASKLVNSVQKEIHGLIDKAEISMEERLESVRTDAEKEMKAALNSELERLQALKAVNPNIRDEELTQIETQMSELSGYIGKAQVQLDSLRLIVVSHN.

The Helicase ATP-binding domain occupies Glu164–Asp334. Asp177 to Thr184 contacts ATP. The DEAH box motif lies at Asp280–His283. Residues Arg492–Ile668 enclose the Helicase C-terminal domain.

This sequence belongs to the SNF2/RAD54 helicase family. RapA subfamily. In terms of assembly, interacts with the RNAP. Has a higher affinity for the core RNAP than for the holoenzyme. Its ATPase activity is stimulated by binding to RNAP.

In terms of biological role, transcription regulator that activates transcription by stimulating RNA polymerase (RNAP) recycling in case of stress conditions such as supercoiled DNA or high salt concentrations. Probably acts by releasing the RNAP, when it is trapped or immobilized on tightly supercoiled DNA. Does not activate transcription on linear DNA. Probably not involved in DNA repair. The polypeptide is RNA polymerase-associated protein RapA (Aliivibrio fischeri (strain MJ11) (Vibrio fischeri)).